A 111-amino-acid chain; its full sequence is Ghrelin (111 aa).

The N-terminal stretch at 1–26 (MRQMKRTAYIILLVCVLALWMDSVQA) is a signal peptide. Polar residues predominate over residues 28 to 37 (SSFLSPSQRP). A disordered region spans residues 28-53 (SSFLSPSQRPQGKDKKPPRVGRRDSD). The O-decanoyl serine; alternate moiety is linked to residue serine 29. Residue serine 29 is the site of O-hexanoyl serine; alternate attachment. The O-octanoyl serine; alternate moiety is linked to residue serine 29. The span at 38–53 (QGKDKKPPRVGRRDSD) shows a compositional bias: basic and acidic residues. A Valine amide modification is found at valine 47. Residues 51-111 (DSDGILDLFM…DLLMDTPAKE (61 aa)) constitute a propeptide, removed in mature form.

The protein belongs to the motilin family. In terms of processing, O-octanoylated by GOAT/MBOAT4. O-octanoylation or O-decanoylation is essential for activity. The O-decanoylated form ghrelin-21-C10 differs in the length of the carbon backbone of the carboxylic acid forming an ester bond with Ser-29. 44% of eel ghrelin is O-decanoylated. Highest levels in stomach and anterior intestine. Lower levels in posterior intestine, kidney and brain. Low levels in heart, head kidney and middle intestine.

It is found in the secreted. Functionally, ligand for growth hormone secretagogue receptor type 1 (GHSR). Induces the release of growth hormone from the pituitary. Has an appetite-stimulating effect, induces adiposity and stimulates gastric acid secretion. Involved in growth regulation. This chain is Ghrelin (ghrl), found in Anguilla japonica (Japanese eel).